Here is a 390-residue protein sequence, read N- to C-terminus: Probable tRNA pseudouridine synthase D 2 (390 aa).

The Nucleophile role is filled by D93. Residues 166–353 (YVLNYYGIQR…YGTRRKMVTP (188 aa)) enclose the TRUD domain.

The protein belongs to the pseudouridine synthase TruD family.

It carries out the reaction uridine(13) in tRNA = pseudouridine(13) in tRNA. Its function is as follows. Could be responsible for synthesis of pseudouridine from uracil-13 in transfer RNAs. This is Probable tRNA pseudouridine synthase D 2 from Methanococcus maripaludis (strain DSM 14266 / JCM 13030 / NBRC 101832 / S2 / LL).